Reading from the N-terminus, the 317-residue chain is Taste receptor type 2 member 14 (317 aa).

The Extracellular segment spans residues 1–7 (MGDVIKS). A helical transmembrane segment spans residues 8–28 (IFTFVLIVEFIIGNLGNSFIA). The Cytoplasmic portion of the chain corresponds to 29–55 (LVNCIDWVKGRKISSVDQILTALAISR). The chain crosses the membrane as a helical span at residues 56 to 76 (ISLVWLIFGSWCVSVFLPALF). Over 77–87 (ATEKMFRMLTN) the chain is Extracellular. Threonine 86 and tryptophan 89 together coordinate cholesterol. The helical transmembrane segment at 88 to 108 (IWTVINHFSVWLATGLGTFYF) threads the bilayer. The Cytoplasmic segment spans residues 109–129 (LKIANFSNSIFLYLKWRVKKV). A helical transmembrane segment spans residues 130 to 150 (VLVLLLVTSVFLFLNIALINI). The Extracellular portion of the chain corresponds to 151–184 (HINASINGYRRNKTCSSDSSNFTRFSSLIVLTST). N-linked (GlcNAc...) asparagine glycans are attached at residues asparagine 153, asparagine 162, and asparagine 171. Valine 180 contributes to the cholesterol binding site. Residues 185-205 (VFIFIPFTLSLAMFLLLIFSL) form a helical membrane-spanning segment. Topologically, residues 206–232 (WKHRKKMQHXVKRSGDASTKAHRGVKS) are cytoplasmic. A helical membrane pass occupies residues 233-253 (VITFFLLYAIFCLSFFISVWT). At 254 to 261 (SERLEENL) the chain is on the extracellular side. Residues 262 to 282 (IILSQVMGMAYPSCHSCVLIL) form a helical membrane-spanning segment. Residues serine 265 and methionine 268 each contribute to the cholesterol site. Residues 283 to 317 (GNKKLRQASLSVLLWLRYMFKDGEPSGHKEFRESS) are Cytoplasmic-facing.

This sequence belongs to the G-protein coupled receptor T2R family. In terms of assembly, core component of the TAS2R14-GNAI1 complex, consisting of TAS2R14, GNAI1, GNB1 and GNG2; within the complex interacts with GNAI1. Core component of the TAS2R14-GNAT3 complex, consisting of TAS2R14, GNAT3, GNB1 and GNG2; within the complex interacts with GNAT3. Core component of the TAS2R14-GNAS2 complex, consisting of TAS2R14, GNAS2, GNB1 and GNG2; within the complex interacts with GNAS2.

It is found in the membrane. It catalyses the reaction Ca(2+)(in) = Ca(2+)(out). It carries out the reaction 3',5'-cyclic AMP(in) = 3',5'-cyclic AMP(out). With respect to regulation, basal activity is enhanced by binding to bitter tastants, such as flufenamic acid and aristolochic acid. Regulated by cholesterol in a concentration-dependent manner. Functionally, gustducin-linked G-protein coupled receptor that plays a role in the perception of bitterness. The activity of this receptor stimulates GNAT3, activating the gustducin G-protein pathway. Likely plays a role in sensing the chemical composition of the gastrointestinal content and other extra-oral tissues via the inhibitory G-protein pathways. This Gorilla gorilla gorilla (Western lowland gorilla) protein is Taste receptor type 2 member 14 (TAS2R14).